The primary structure comprises 202 residues: Ion-translocating oxidoreductase complex subunit G (202 aa).

A helical membrane pass occupies residues 11 to 31 (AILLALIALICTALSTGIYLL). An FMN phosphoryl threonine modification is found at T177.

Belongs to the RnfG family. In terms of assembly, the complex is composed of six subunits: RnfA, RnfB, RnfC, RnfD, RnfE and RnfG. FMN serves as cofactor.

The protein localises to the cell inner membrane. In terms of biological role, part of a membrane-bound complex that couples electron transfer with translocation of ions across the membrane. In Pasteurella multocida (strain Pm70), this protein is Ion-translocating oxidoreductase complex subunit G.